A 465-amino-acid chain; its full sequence is Fumarate hydratase class II (465 aa).

Residues 100–102, 131–134, 141–143, and threonine 189 each bind substrate; these read SGT, HPND, and SSN. Histidine 190 (proton donor/acceptor) is an active-site residue. Residue serine 320 is part of the active site. Residues serine 321 and 326–328 contribute to the substrate site; that span reads KVN.

The protein belongs to the class-II fumarase/aspartase family. Fumarase subfamily. As to quaternary structure, homotetramer.

Its subcellular location is the cytoplasm. The catalysed reaction is (S)-malate = fumarate + H2O. Its pathway is carbohydrate metabolism; tricarboxylic acid cycle; (S)-malate from fumarate: step 1/1. In terms of biological role, involved in the TCA cycle. Catalyzes the stereospecific interconversion of fumarate to L-malate. In Mesorhizobium japonicum (strain LMG 29417 / CECT 9101 / MAFF 303099) (Mesorhizobium loti (strain MAFF 303099)), this protein is Fumarate hydratase class II.